Consider the following 82-residue polypeptide: Small ribosomal subunit protein bS16 (82 aa).

It belongs to the bacterial ribosomal protein bS16 family.

This is Small ribosomal subunit protein bS16 from Saccharophagus degradans (strain 2-40 / ATCC 43961 / DSM 17024).